Consider the following 450-residue polypeptide: Involucrin (450 aa).

Residues 1-19 (MSQQHTLPVTLPPTLSQEL) show a composition bias toward polar residues. 3 disordered regions span residues 1–43 (MSQQ…LPAP), 77–370 (QLQQ…EQLK), and 422–450 (PGQVQDIQPPQPPKGEVLLPAEQQQEPEV). Residues 86–108 (QEVHLAKHQELQELQEQELHLGK) show a composition bias toward basic and acidic residues. The segment covering 120-135 (GKQQQQQESQEQELYL) has biased composition (low complexity). 2 stretches are compositionally biased toward basic and acidic residues: residues 187–200 (LGKRLEPQEQELHL) and 264–281 (QELHLGKRLEPQEQELHL). Residues 295–344 (GEAAAAGVTGAGPAASKAARRATGAGTAPGKAAAAAGATGAGTAATAPAT) are compositionally biased toward low complexity. The segment covering 345 to 370 (AEERQKAESLEQQLEQEKAQREEQLK) has biased composition (basic and acidic residues).

Belongs to the involucrin family. Directly or indirectly cross-linked to cornifelin (CNFN). Post-translationally, substrate of transglutaminase. Specific glutamines or lysines are cross-linked to keratins, desmoplakin and to inter involucrin molecules. As to expression, keratinocytes of epidermis and other stratified squamous epithelia.

Its subcellular location is the cytoplasm. Part of the insoluble cornified cell envelope (CE) of stratified squamous epithelia. The polypeptide is Involucrin (IVL) (Lemur catta (Ring-tailed lemur)).